Reading from the N-terminus, the 480-residue chain is Siroheme synthase 2 (480 aa).

Residues 1 to 202 (MDYLPMFARL…QDWQSAETWL (202 aa)) form a precorrin-2 dehydrogenase /sirohydrochlorin ferrochelatase region. NAD(+) contacts are provided by residues 22 to 23 (EV) and 43 to 44 (PE). Residue Ser-126 is modified to Phosphoserine. The interval 214 to 480 (GEVVLVGAGP…GCDLKLVNLA (267 aa)) is uroporphyrinogen-III C-methyltransferase. An S-adenosyl-L-methionine-binding site is contributed by Pro-223. Asp-246 serves as the catalytic Proton acceptor. Catalysis depends on Lys-268, which acts as the Proton donor. S-adenosyl-L-methionine is bound by residues 299 to 301 (GGD), 329 to 330 (TA), Met-381, and Gly-410.

This sequence in the N-terminal section; belongs to the precorrin-2 dehydrogenase / sirohydrochlorin ferrochelatase family. It in the C-terminal section; belongs to the precorrin methyltransferase family.

It carries out the reaction uroporphyrinogen III + 2 S-adenosyl-L-methionine = precorrin-2 + 2 S-adenosyl-L-homocysteine + H(+). It catalyses the reaction precorrin-2 + NAD(+) = sirohydrochlorin + NADH + 2 H(+). The catalysed reaction is siroheme + 2 H(+) = sirohydrochlorin + Fe(2+). The protein operates within cofactor biosynthesis; adenosylcobalamin biosynthesis; precorrin-2 from uroporphyrinogen III: step 1/1. Its pathway is cofactor biosynthesis; adenosylcobalamin biosynthesis; sirohydrochlorin from precorrin-2: step 1/1. It functions in the pathway porphyrin-containing compound metabolism; siroheme biosynthesis; precorrin-2 from uroporphyrinogen III: step 1/1. It participates in porphyrin-containing compound metabolism; siroheme biosynthesis; siroheme from sirohydrochlorin: step 1/1. The protein operates within porphyrin-containing compound metabolism; siroheme biosynthesis; sirohydrochlorin from precorrin-2: step 1/1. Multifunctional enzyme that catalyzes the SAM-dependent methylations of uroporphyrinogen III at position C-2 and C-7 to form precorrin-2 via precorrin-1. Then it catalyzes the NAD-dependent ring dehydrogenation of precorrin-2 to yield sirohydrochlorin. Finally, it catalyzes the ferrochelation of sirohydrochlorin to yield siroheme. This chain is Siroheme synthase 2, found in Aeromonas salmonicida (strain A449).